The primary structure comprises 302 residues: Arginase (302 aa).

Mn(2+) contacts are provided by His103, Asp126, His128, and Asp130. Residues 128–132 (HGDLN), 139–141 (SGN), and Asp180 each bind substrate. Mn(2+)-binding residues include Asp229 and Asp231. Substrate-binding residues include Thr243 and Glu274.

Belongs to the arginase family. The cofactor is Mn(2+).

The catalysed reaction is L-arginine + H2O = urea + L-ornithine. Its pathway is nitrogen metabolism; urea cycle; L-ornithine and urea from L-arginine: step 1/1. The chain is Arginase (arg) from Staphylococcus aureus (strain COL).